The following is a 107-amino-acid chain: Putative double-stranded DNA mimic protein YpsIP31758_1954 (107 aa).

This sequence belongs to the putative dsDNA mimic protein family.

May act as a double-stranded DNA (dsDNA) mimic. Probably regulates the activity of a dsDNA-binding protein. In Yersinia pseudotuberculosis serotype O:1b (strain IP 31758), this protein is Putative double-stranded DNA mimic protein YpsIP31758_1954.